We begin with the raw amino-acid sequence, 406 residues long: MEKIKKQNNIGSYSSDKDGEYKKFRFSKTSIRGFLLKEYEREVPIIVKIQSYRNKFLDFYFKMASILGEEVFFILALPISTWCVATQLGVELCVVLALTIGGGNILKNTFTLPRPPPNIVWTNTAHQKDHGLPSTHTASAFGLTFYFLIYTYFLFPTIGESFNISLLSMFFIVLFWSTSVMFSRLYNGHHTPMDVIAGLIVAITSILATTYQLRYFIEGMVLSETFLFGPMLYIAILSAILFFHPQANTGPTPAYPETGLVCGASLGSLISLWLHAQHPCPLMNQELLLLEANYDSIVSTIHSIPLLLHGSRILIGLVLVGIAKVFSKKFFFFAYDLVIRANTNNEQSQPITTVSFDPNKKIIVTPTIEAFSKLFVYTCVSFTIVSMPYLFYYLNIQTSADVTRYY.

Helical transmembrane passes span 66-86 (ILGE…CVAT) and 92-112 (LCVV…TFTL). The phosphatase sequence motif I stretch occupies residues 107–115 (KNTFTLPRP). A phosphatase sequence motif II region spans residues 133–136 (PSTH). Catalysis depends on His136, which acts as the Proton donor. 2 helical membrane passes run 138–158 (ASAF…FPTI) and 162–182 (FNIS…SVMF). The tract at residues 183–194 (SRLYNGHHTPMD) is phosphatase sequence motif III. Residue His190 is the Nucleophile of the active site. Helical transmembrane passes span 193–213 (MDVI…TYQL), 225–245 (TFLF…FFHP), 254–274 (AYPE…SLWL), 313–333 (ILIG…FFFF), and 374–394 (LFVY…FYYL).

Belongs to the type 2 lipid phosphate phosphatase family.

Its subcellular location is the endoplasmic reticulum membrane. Functionally, has enzymatic activity against both sphingosine 1 phosphate (S1P) and dihydro-S1P. Regulates intracellular and extracellular S1P levels. This is Probable sphingosine-1-phosphate phosphatase (sppA) from Dictyostelium discoideum (Social amoeba).